Reading from the N-terminus, the 1104-residue chain is Ankyrin repeat- and BTB/POZ domain-containing protein 3 (1104 aa).

Residues 168 to 188 (IVLSWGLAAHCTAAALAALSL) form a helical membrane-spanning segment. Positions 260–301 (SCSGPGSGSGSGPGPSSGPGAAPAADKEREAPGGGAASGGAC) are disordered. Over residues 264–276 (PGSGSGSGPGPSS) the composition is skewed to gly residues. 5 ANK repeats span residues 603 to 632 (QGMTPLMYACVRGDEAMVQMLLDAGADLNV), 649 to 678 (RHWTALTFAVLHGHIPVVQLLLDAGAKVEG), 687 to 716 (YSETPLQLAAAVGNFELVSLLLERGADPLI), 730 to 759 (GDMNSFSQAAAHGHRNVFRKLLAQPEKEKS), and 825 to 854 (TWLESLRIAFQQHRRPLIQCLLKEFKTIQE). The BTB domain occupies 923–989 (SDVTFLVEGR…LYYGGPESLL (67 aa)).

Its subcellular location is the membrane. The polypeptide is Ankyrin repeat- and BTB/POZ domain-containing protein 3 (Homo sapiens (Human)).